Reading from the N-terminus, the 131-residue chain is Large ribosomal subunit protein bL19 (131 aa).

This sequence belongs to the bacterial ribosomal protein bL19 family.

In terms of biological role, this protein is located at the 30S-50S ribosomal subunit interface and may play a role in the structure and function of the aminoacyl-tRNA binding site. The sequence is that of Large ribosomal subunit protein bL19 from Synechococcus sp. (strain CC9902).